The following is a 509-amino-acid chain: Proline-rich receptor-like protein kinase PERK15 (509 aa).

Positions 1 to 44 are disordered; sequence MSTDTIPSLSSPPAPEFPSTTPDTATSPAPSQPSIIGPSSLAPF. The Extracellular portion of the chain corresponds to 1–61; that stretch reads MSTDTIPSLS…DGGSRNVALT (61 aa). Over residues 18–34 the composition is skewed to low complexity; sequence PSTTPDTATSPAPSQPS. A helical membrane pass occupies residues 62–82; it reads GLITGVVLGATFVLLGVCIFV. Residues 83–509 lie on the Cytoplasmic side of the membrane; it reads CFYKRKKRKL…IEPEKNTKDT (427 aa). Threonine 132 bears the Phosphothreonine mark. One can recognise a Protein kinase domain in the interval 143–423; the sequence is FSNTNLLGQG…VRAFEGNISI (281 aa). ATP contacts are provided by residues 149-157 and lysine 171; that span reads LGQGGFGYV. Tyrosine 216 is modified (phosphotyrosine). The active-site Proton acceptor is aspartate 267. Phosphoserine is present on serine 300. Residues threonine 301 and threonine 306 each carry the phosphothreonine modification. At tyrosine 314 the chain carries Phosphotyrosine. Polar residues predominate over residues 468-499; that stretch reads FGSSECSGLTSDNGQNPSGSSSITEGQRTTQE. A disordered region spans residues 468–509; that stretch reads FGSSECSGLTSDNGQNPSGSSSITEGQRTTQEIEPEKNTKDT.

It belongs to the protein kinase superfamily. Ser/Thr protein kinase family. Mostly expressed in inflorescence bolts, and, to a lower extent, in flower buds and siliques.

It localises to the cell membrane. The catalysed reaction is L-seryl-[protein] + ATP = O-phospho-L-seryl-[protein] + ADP + H(+). The enzyme catalyses L-threonyl-[protein] + ATP = O-phospho-L-threonyl-[protein] + ADP + H(+). The protein is Proline-rich receptor-like protein kinase PERK15 (PERK15) of Arabidopsis thaliana (Mouse-ear cress).